Reading from the N-terminus, the 389-residue chain is MKIDSWLNERLDRMKEAGVHRNLRSMDGAPVPERNIDGENQTVWSSNNYLGLASDRRLIDAAQTALQQFGTGSSGSRLTTGNSVWHEKLEKKIASFKLTEAALLFSSGYLANVGVLSSLPEKEDVILSDQLNHASMIDGCRLSKADTVVYRHIDMNDLENKLNETQRYQRRFIVTDGVFSMDGTIAPLDQIISLAKRYHAFVVVDDAHATGVLGDSGQGTSEYFGVCPDIVIGTLSKAVGAEGGFAAGSAVFIDFLLNHARTFIFQTAIPPASCAAAHEAFNIIEASREKRQLLFSYISMIRTSLKNMGYVVKGDHTPIIPVVIGDAHKTVLFAEKLQGKGIYAPAIRPPTVAPGESRIRITITSDHSMGDIDHLLQTFHSIGKELHII.

Residue Arg-21 coordinates substrate. 108–109 (GY) contacts pyridoxal 5'-phosphate. Substrate is bound at residue His-133. Residues Ser-180, 205-208 (DDAH), and 234-237 (TLSK) each bind pyridoxal 5'-phosphate. Lys-237 is subject to N6-(pyridoxal phosphate)lysine. Thr-351 contacts substrate.

The protein belongs to the class-II pyridoxal-phosphate-dependent aminotransferase family. BioF subfamily. Homodimer. Requires pyridoxal 5'-phosphate as cofactor.

The enzyme catalyses 6-carboxyhexanoyl-[ACP] + L-alanine + H(+) = (8S)-8-amino-7-oxononanoate + holo-[ACP] + CO2. It functions in the pathway cofactor biosynthesis; biotin biosynthesis. Its function is as follows. Catalyzes the decarboxylative condensation of pimeloyl-[acyl-carrier protein] and L-alanine to produce 8-amino-7-oxononanoate (AON), [acyl-carrier protein], and carbon dioxide. This is 8-amino-7-oxononanoate synthase 2 (bioF) from Bacillus subtilis (strain 168).